The chain runs to 30 residues: V-type proton ATPase catalytic subunit A isoform 1 (30 aa).

Belongs to the ATPase alpha/beta chains family. V-ATPase is a heteromultimeric enzyme composed of a peripheral catalytic V1 complex (main components: subunits A, B, C, D, E, and F) attached to an integral membrane V0 proton pore complex (main component: the proteolipid protein).

It catalyses the reaction ATP + H2O + 4 H(+)(in) = ADP + phosphate + 5 H(+)(out). Functionally, catalytic subunit of the peripheral V1 complex of vacuolar ATPase. V-ATPase vacuolar ATPase is responsible for acidifying a variety of intracellular compartments in eukaryotic cells. The polypeptide is V-type proton ATPase catalytic subunit A isoform 1 (Psilotum nudum (Whisk fern)).